A 144-amino-acid polypeptide reads, in one-letter code: Macromomycin (144 aa).

The first 32 residues, Met-1–Gly-32, serve as a signal peptide directing secretion. Cystine bridges form between Cys-68–Cys-78 and Cys-120–Cys-125.

The protein belongs to the neocarzinostatin family.

Binds non-covalently to a chromophore which is the cytotoxic and mutagenic component of the antibiotic. The chromophore binds to DNA as a weak intercalator and causes single- and double-strand breaks. This is Macromomycin from Streptomyces macromomyceticus.